We begin with the raw amino-acid sequence, 296 residues long: Thymidylate synthase (296 aa).

DUMP is bound by residues arginine 23 and 157 to 158 (RR). The Nucleophile role is filled by cysteine 177. DUMP contacts are provided by residues 198-201 (RSAD), asparagine 209, and 239-241 (HIY). Aspartate 201 lines the (6R)-5,10-methylene-5,6,7,8-tetrahydrofolate pocket. Position 295 (alanine 295) interacts with (6R)-5,10-methylene-5,6,7,8-tetrahydrofolate.

Belongs to the thymidylate synthase family. Bacterial-type ThyA subfamily. As to quaternary structure, homodimer.

The protein localises to the cytoplasm. The catalysed reaction is dUMP + (6R)-5,10-methylene-5,6,7,8-tetrahydrofolate = 7,8-dihydrofolate + dTMP. Its pathway is pyrimidine metabolism; dTTP biosynthesis. Functionally, catalyzes the reductive methylation of 2'-deoxyuridine-5'-monophosphate (dUMP) to 2'-deoxythymidine-5'-monophosphate (dTMP) while utilizing 5,10-methylenetetrahydrofolate (mTHF) as the methyl donor and reductant in the reaction, yielding dihydrofolate (DHF) as a by-product. This enzymatic reaction provides an intracellular de novo source of dTMP, an essential precursor for DNA biosynthesis. The chain is Thymidylate synthase from Zymomonas mobilis subsp. mobilis (strain ATCC 31821 / ZM4 / CP4).